The following is a 42-amino-acid chain: Potassium channel toxin gamma-KTx 1.6 (42 aa).

4 cysteine pairs are disulfide-bonded: C5-C23, C11-C34, C20-C39, and C24-C41.

Belongs to the ergtoxin family. Gamma-KTx 1 subfamily. As to expression, expressed by the venom gland.

It is found in the secreted. Its function is as follows. Blocks Kv11/ERG potassium channels. The chain is Potassium channel toxin gamma-KTx 1.6 from Centruroides exilicauda (Bark scorpion).